The primary structure comprises 341 residues: Queuosine 5'-phosphate N-glycosylase/hydrolase (341 aa).

N-acetylmethionine is present on Met-1. Queuine is bound by residues His-53, Phe-237, Asp-239, Asp-314, Tyr-315, and Asp-319. Residue Asp-239 is the Nucleophile or transition state stabilizer of the active site.

This sequence belongs to the QNG1 protein family.

It catalyses the reaction queuosine 5'-phosphate + H2O = queuine + D-ribose 5-phosphate. Its function is as follows. Catalyzes the hydrolysis of queuosine 5'-phosphate, releasing the nucleobase queuine (q). Is required for salvage of queuine from exogenous queuosine (Q) that is imported and then converted to queuosine 5'-phosphate intracellularly. The sequence is that of Queuosine 5'-phosphate N-glycosylase/hydrolase from Bos taurus (Bovine).